A 42-amino-acid chain; its full sequence is Photosystem I reaction center subunit IX (42 aa).

The chain crosses the membrane as a helical span at residues 8 to 28 (YLSTAPVLLTIWLSFTAALVI).

Belongs to the PsaJ family.

It is found in the plastid. It localises to the chloroplast thylakoid membrane. In terms of biological role, may help in the organization of the PsaE and PsaF subunits. This is Photosystem I reaction center subunit IX from Guillardia theta (Cryptophyte).